Consider the following 143-residue polypeptide: Putative protein FPV235 (143 aa).

This is Putative protein FPV235 from Vertebrata (FPV).